A 185-amino-acid chain; its full sequence is GTP-binding protein rhb1 (185 aa).

The GTP site is built by S16, G18, K19, S20, S21, V32, Y35, T38, N119, D122, and A150. S20 is a Mg(2+) binding site. The Effector region motif lies at 35–43 (YYPTIENTF). Mg(2+) is bound at residue T38. Position 182 is a cysteine methyl ester (C182). A lipid anchor (S-farnesyl cysteine) is attached at C182. A propeptide spans 183–185 (VIA) (removed in mature form).

It belongs to the small GTPase superfamily. Rheb family.

It is found in the cell membrane. The catalysed reaction is GTP + H2O = GDP + phosphate + H(+). In terms of biological role, binds GTP and exhibits intrinsic GTPase activity. Regulates entry into stationary phase when extracellular nitrogen levels are adequate for growth. In Schizosaccharomyces pombe (strain 972 / ATCC 24843) (Fission yeast), this protein is GTP-binding protein rhb1 (rhb1).